Here is a 323-residue protein sequence, read N- to C-terminus: Phosphoribosylaminoimidazole-succinocarboxamide synthase (323 aa).

Belongs to the SAICAR synthetase family.

It catalyses the reaction 5-amino-1-(5-phospho-D-ribosyl)imidazole-4-carboxylate + L-aspartate + ATP = (2S)-2-[5-amino-1-(5-phospho-beta-D-ribosyl)imidazole-4-carboxamido]succinate + ADP + phosphate + 2 H(+). It participates in purine metabolism; IMP biosynthesis via de novo pathway; 5-amino-1-(5-phospho-D-ribosyl)imidazole-4-carboxamide from 5-amino-1-(5-phospho-D-ribosyl)imidazole-4-carboxylate: step 1/2. The sequence is that of Phosphoribosylaminoimidazole-succinocarboxamide synthase from Azobacteroides pseudotrichonymphae genomovar. CFP2.